Consider the following 252-residue polypeptide: Cell division protein ZapD (252 aa).

It belongs to the ZapD family. As to quaternary structure, interacts with FtsZ.

The protein localises to the cytoplasm. Its function is as follows. Cell division factor that enhances FtsZ-ring assembly. Directly interacts with FtsZ and promotes bundling of FtsZ protofilaments, with a reduction in FtsZ GTPase activity. This chain is Cell division protein ZapD, found in Dechloromonas aromatica (strain RCB).